Consider the following 142-residue polypeptide: AP-2 complex subunit sigma (142 aa).

The protein belongs to the adaptor complexes small subunit family. As to quaternary structure, adaptor protein complex 2 (AP-2) is a heterotetramer composed of two large adaptins (alpha-type and beta-type subunits), a medium adaptin (mu-type subunit AP50) and a small adaptin (sigma-type subunit AP17).

The protein localises to the cell membrane. It is found in the membrane. The protein resides in the coated pit. Functionally, component of the adaptor complexes which link clathrin to receptors in coated vesicles. Clathrin-associated protein complexes are believed to interact with the cytoplasmic tails of membrane proteins, leading to their selection and concentration. The protein is AP-2 complex subunit sigma (ap2s1) of Dictyostelium discoideum (Social amoeba).